The primary structure comprises 312 residues: Aquaglyceroporin-2 (312 aa).

The next 6 helical transmembrane spans lie at phenylalanine 78–valine 98, leucine 104–isoleucine 124, tyrosine 151–alanine 171, glycine 203–cysteine 223, valine 239–alanine 259, and tyrosine 286–tyrosine 306.

This sequence belongs to the MIP/aquaporin (TC 1.A.8) family.

It localises to the membrane. The enzyme catalyses glycerol(in) = glycerol(out). It catalyses the reaction H2O(in) = H2O(out). It carries out the reaction urea(in) = urea(out). Its function is as follows. Mediates water and glycerol transport across cell membranes. Permeable to urea. Permeable to methylamine/methylammonium. Permeable to dihydroxyacetone. The protein is Aquaglyceroporin-2 of Trypanosoma brucei brucei.